The following is a 123-amino-acid chain: ATP synthase epsilon chain (123 aa).

The protein belongs to the ATPase epsilon chain family. As to quaternary structure, F-type ATPases have 2 components, CF(1) - the catalytic core - and CF(0) - the membrane proton channel. CF(1) has five subunits: alpha(3), beta(3), gamma(1), delta(1), epsilon(1). CF(0) has three main subunits: a, b and c.

Its subcellular location is the cell membrane. Produces ATP from ADP in the presence of a proton gradient across the membrane. The chain is ATP synthase epsilon chain from Corynebacterium diphtheriae (strain ATCC 700971 / NCTC 13129 / Biotype gravis).